Reading from the N-terminus, the 109-residue chain is Iron-sulfur cluster assembly protein CyaY (109 aa).

This sequence belongs to the frataxin family.

Functionally, involved in iron-sulfur (Fe-S) cluster assembly. May act as a regulator of Fe-S biogenesis. The polypeptide is Iron-sulfur cluster assembly protein CyaY (Verminephrobacter eiseniae (strain EF01-2)).